A 168-amino-acid chain; its full sequence is MKKRFWFLAGVVSVVLAIQVKNAVFIDYKVEGVSMNPTFQEGNELLVNKFSHRFKTIHRFDIVLFKGPDHKVLIKRVIGLPGETIKYKDDQLYVNGKQVAEPFLKHLKSVSAGSHVTGDFSLKDVTGTSKVPKGKYFVVGDNRIYSFDSRHFGPIREKNIVGVISDAE.

Residues methionine 1–tryptophan 6 are Cytoplasmic-facing. A helical membrane pass occupies residues phenylalanine 7 to isoleucine 26. Residues aspartate 27–glutamate 168 are Extracellular-facing. Active-site residues include serine 34 and lysine 75.

This sequence belongs to the peptidase S26 family.

Its subcellular location is the cell membrane. It carries out the reaction Cleavage of hydrophobic, N-terminal signal or leader sequences from secreted and periplasmic proteins.. The chain is Signal peptidase I V (sipV) from Bacillus subtilis (strain 168).